Consider the following 280-residue polypeptide: Energy-coupling factor transporter ATP-binding protein EcfA2 (280 aa).

The 243-residue stretch at 3–245 folds into the ABC transporter domain; that stretch reads INLQNVSYTY…VSLLEKKQLG (243 aa). 40–47 contributes to the ATP binding site; it reads GHTGSGKS.

This sequence belongs to the ABC transporter superfamily. Energy-coupling factor EcfA family. Forms a stable energy-coupling factor (ECF) transporter complex composed of 2 membrane-embedded substrate-binding proteins (S component), 2 ATP-binding proteins (A component) and 2 transmembrane proteins (T component).

It localises to the cell membrane. ATP-binding (A) component of a common energy-coupling factor (ECF) ABC-transporter complex. Unlike classic ABC transporters this ECF transporter provides the energy necessary to transport a number of different substrates. This chain is Energy-coupling factor transporter ATP-binding protein EcfA2, found in Streptococcus pyogenes serotype M1.